The primary structure comprises 80 residues: ATP synthase subunit c (80 aa).

Transmembrane regions (helical) follow at residues 11-31 (IAAA…IGIL) and 53-73 (FFIV…LGLY).

It belongs to the ATPase C chain family. In terms of assembly, F-type ATPases have 2 components, F(1) - the catalytic core - and F(0) - the membrane proton channel. F(1) has five subunits: alpha(3), beta(3), gamma(1), delta(1), epsilon(1). F(0) has three main subunits: a(1), b(2) and c(10-14). The alpha and beta chains form an alternating ring which encloses part of the gamma chain. F(1) is attached to F(0) by a central stalk formed by the gamma and epsilon chains, while a peripheral stalk is formed by the delta and b chains.

It is found in the cell inner membrane. F(1)F(0) ATP synthase produces ATP from ADP in the presence of a proton or sodium gradient. F-type ATPases consist of two structural domains, F(1) containing the extramembraneous catalytic core and F(0) containing the membrane proton channel, linked together by a central stalk and a peripheral stalk. During catalysis, ATP synthesis in the catalytic domain of F(1) is coupled via a rotary mechanism of the central stalk subunits to proton translocation. In terms of biological role, key component of the F(0) channel; it plays a direct role in translocation across the membrane. A homomeric c-ring of between 10-14 subunits forms the central stalk rotor element with the F(1) delta and epsilon subunits. The chain is ATP synthase subunit c from Aeromonas hydrophila subsp. hydrophila (strain ATCC 7966 / DSM 30187 / BCRC 13018 / CCUG 14551 / JCM 1027 / KCTC 2358 / NCIMB 9240 / NCTC 8049).